The chain runs to 272 residues: Phosphoglycolate phosphatase (272 aa).

Residue Asp19 is the Nucleophile of the active site. Mg(2+) is bound by residues Asp19, Asp21, and Asp182.

This sequence belongs to the HAD-like hydrolase superfamily. CbbY/CbbZ/Gph/YieH family. Mg(2+) is required as a cofactor.

It carries out the reaction 2-phosphoglycolate + H2O = glycolate + phosphate. The protein operates within organic acid metabolism; glycolate biosynthesis; glycolate from 2-phosphoglycolate: step 1/1. Its function is as follows. Specifically catalyzes the dephosphorylation of 2-phosphoglycolate. Is involved in the dissimilation of the intracellular 2-phosphoglycolate formed during the DNA repair of 3'-phosphoglycolate ends, a major class of DNA lesions induced by oxidative stress. The sequence is that of Phosphoglycolate phosphatase from Pseudomonas fluorescens (strain ATCC BAA-477 / NRRL B-23932 / Pf-5).